The sequence spans 237 residues: Peptidase E (237 aa).

Catalysis depends on charge relay system residues Ser-122, Asp-137, and His-159.

Belongs to the peptidase S51 family.

It localises to the cytoplasm. It catalyses the reaction Dipeptidase E catalyzes the hydrolysis of dipeptides Asp-|-Xaa. It does not act on peptides with N-terminal Glu, Asn or Gln, nor does it cleave isoaspartyl peptides.. Its function is as follows. Hydrolyzes dipeptides containing N-terminal aspartate residues. May play a role in allowing the cell to use peptide aspartate to spare carbon otherwise required for the synthesis of the aspartate family of amino acids. In Shewanella baltica (strain OS185), this protein is Peptidase E.